The following is a 569-amino-acid chain: Nucleoprotein (569 aa).

The segment at 54-241 (MRKERRDDND…IDTKKSSLNI (188 aa)) is binding site for the cap structure m7GTP. Positions 389 and 391 each coordinate Mn(2+). Zn(2+)-binding residues include Glu-399, Cys-506, His-509, and Cys-529. Asp-533 contacts Mn(2+).

This sequence belongs to the arenaviridae nucleocapsid protein family. As to quaternary structure, homomultimerizes to form the nucleocapsid. Binds to viral genomic RNA. Interacts with glycoprotein G2. Interacts with protein Z; this interaction probably directs the encapsidated genome to budding sites. Interacts with protein L; this interaction does not interfere with Z-L interaction. Interacts with host IKBKE (via Protein kinase domain); the interaction inhibits IKBKE kinase activity.

The protein resides in the virion. It is found in the host cytoplasm. In terms of biological role, encapsidates the genome, protecting it from nucleases. The encapsidated genomic RNA is termed the nucleocapsid (NC). Serves as template for viral transcription and replication. The increased presence of protein N in host cell does not seem to trigger the switch from transcription to replication as observed in other negative strain RNA viruses. Through the interaction with host IKBKE, strongly inhibits the phosphorylation and nuclear translocation of host IRF3, a protein involved in interferon activation pathway, leading to the inhibition of interferon-beta and IRF3-dependent promoters activation. Also encodes a functional 3'-5' exoribonuclease that degrades preferentially dsRNA substrates and thereby participates in the suppression of interferon induction. The polypeptide is Nucleoprotein (Lassa virus (strain Mouse/Sierra Leone/Josiah/1976) (LASV)).